Consider the following 181-residue polypeptide: tRNA-splicing endonuclease (181 aa).

Catalysis depends on residues Tyr118, His126, and Lys157.

The protein belongs to the tRNA-intron endonuclease family. Archaeal short subfamily. As to quaternary structure, homotetramer; although the tetramer contains four active sites, only two participate in the cleavage. Therefore, it should be considered as a dimer of dimers.

It catalyses the reaction pretRNA = a 3'-half-tRNA molecule with a 5'-OH end + a 5'-half-tRNA molecule with a 2',3'-cyclic phosphate end + an intron with a 2',3'-cyclic phosphate and a 5'-hydroxyl terminus.. In terms of biological role, endonuclease that removes tRNA introns. Cleaves pre-tRNA at the 5'- and 3'-splice sites to release the intron. The products are an intron and two tRNA half-molecules bearing 2',3' cyclic phosphate and 5'-OH termini. Recognizes a pseudosymmetric substrate in which 2 bulged loops of 3 bases are separated by a stem of 4 bp. The polypeptide is tRNA-splicing endonuclease (Sulfolobus acidocaldarius (strain ATCC 33909 / DSM 639 / JCM 8929 / NBRC 15157 / NCIMB 11770)).